Consider the following 138-residue polypeptide: Large ribosomal subunit protein uL16 (138 aa).

A compositionally biased stretch (basic residues) spans 1 to 13; the sequence is MLQPKRRKYRKEQ. The interval 1–20 is disordered; it reads MLQPKRRKYRKEQKGRNTGI.

The protein belongs to the universal ribosomal protein uL16 family. In terms of assembly, part of the 50S ribosomal subunit.

In terms of biological role, binds 23S rRNA and is also seen to make contacts with the A and possibly P site tRNAs. The protein is Large ribosomal subunit protein uL16 of Ralstonia nicotianae (strain ATCC BAA-1114 / GMI1000) (Ralstonia solanacearum).